Reading from the N-terminus, the 344-residue chain is Heat-inducible transcription repressor HrcA (344 aa).

Belongs to the HrcA family.

Its function is as follows. Negative regulator of class I heat shock genes (grpE-dnaK-dnaJ and groELS operons). Prevents heat-shock induction of these operons. The chain is Heat-inducible transcription repressor HrcA from Streptococcus agalactiae serotype Ia (strain ATCC 27591 / A909 / CDC SS700).